The sequence spans 111 residues: Universal stress protein B (111 aa).

The next 2 membrane-spanning stretches (helical) occupy residues 1–21 and 90–110; these read MISTIALFWALCVVCVVNMAR and FILTSALCGLVVVSLIALMIW.

This sequence belongs to the universal stress protein B family.

The protein resides in the cell inner membrane. This is Universal stress protein B from Klebsiella pneumoniae (strain 342).